The sequence spans 311 residues: NAD kinase (311 aa).

The active-site Proton acceptor is Asp89. NAD(+) is bound by residues 89-90 (DG), Arg94, 163-164 (NE), Asp193, and 204-209 (TAYAFS).

The protein belongs to the NAD kinase family. A divalent metal cation is required as a cofactor.

It localises to the cytoplasm. The catalysed reaction is NAD(+) + ATP = ADP + NADP(+) + H(+). Involved in the regulation of the intracellular balance of NAD and NADP, and is a key enzyme in the biosynthesis of NADP. Catalyzes specifically the phosphorylation on 2'-hydroxyl of the adenosine moiety of NAD to yield NADP. The protein is NAD kinase of Mycobacterium leprae (strain Br4923).